The primary structure comprises 307 residues: Ribosomal RNA small subunit methyltransferase A (307 aa).

S-adenosyl-L-methionine-binding residues include Asn35, Val37, Gly62, Glu83, Asp113, and Asn136.

Belongs to the class I-like SAM-binding methyltransferase superfamily. rRNA adenine N(6)-methyltransferase family. RsmA subfamily.

It localises to the cytoplasm. The enzyme catalyses adenosine(1518)/adenosine(1519) in 16S rRNA + 4 S-adenosyl-L-methionine = N(6)-dimethyladenosine(1518)/N(6)-dimethyladenosine(1519) in 16S rRNA + 4 S-adenosyl-L-homocysteine + 4 H(+). Functionally, specifically dimethylates two adjacent adenosines (A1518 and A1519) in the loop of a conserved hairpin near the 3'-end of 16S rRNA in the 30S particle. May play a critical role in biogenesis of 30S subunits. The protein is Ribosomal RNA small subunit methyltransferase A of Bifidobacterium longum subsp. infantis (strain ATCC 15697 / DSM 20088 / JCM 1222 / NCTC 11817 / S12).